Here is a 143-residue protein sequence, read N- to C-terminus: Large ribosomal subunit protein uL11 (143 aa).

Belongs to the universal ribosomal protein uL11 family. As to quaternary structure, part of the ribosomal stalk of the 50S ribosomal subunit. Interacts with L10 and the large rRNA to form the base of the stalk. L10 forms an elongated spine to which L12 dimers bind in a sequential fashion forming a multimeric L10(L12)X complex. One or more lysine residues are methylated.

Its function is as follows. Forms part of the ribosomal stalk which helps the ribosome interact with GTP-bound translation factors. The polypeptide is Large ribosomal subunit protein uL11 (Saccharophagus degradans (strain 2-40 / ATCC 43961 / DSM 17024)).